An 80-amino-acid polypeptide reads, in one-letter code: Conotoxin SmIVA (80 aa).

An N-terminal signal peptide occupies residues M1 to S21. Residues I22 to R38 constitute a propeptide that is removed on maturation. The residue at position 39 (Q39) is a Pyrrolidone carboxylic acid. O-linked (HexNAc...) serine glycosylation is present at S45. 4-hydroxyproline occurs at positions 55, 60, 70, and 72. The residue at position 75 (S75) is a Serine amide. Residues G76–D80 constitute a propeptide that is removed on maturation.

This sequence belongs to the conotoxin A superfamily. In terms of processing, contains 3 disulfide bonds. In terms of tissue distribution, expressed by the venom duct.

The protein localises to the secreted. Neurotoxin with probable activity on sodium channel. Induces intense repetitive firing of the frog neuromuscular junction, leading to a tetanic contracture in muscle fiber (spastic paralysis). In vivo, shows the same effect as the whole venom when injected on fish prey. This is Conotoxin SmIVA from Conus stercusmuscarum (Fly-specked cone).